We begin with the raw amino-acid sequence, 263 residues long: Glutamate 5-kinase (263 aa).

Position 15 (K15) interacts with ATP. Substrate contacts are provided by S55, D142, and N154. ATP is bound by residues 174–175 (SD) and 216–222 (TGGIETK).

The protein belongs to the glutamate 5-kinase family.

Its subcellular location is the cytoplasm. The catalysed reaction is L-glutamate + ATP = L-glutamyl 5-phosphate + ADP. The protein operates within amino-acid biosynthesis; L-proline biosynthesis; L-glutamate 5-semialdehyde from L-glutamate: step 1/2. Catalyzes the transfer of a phosphate group to glutamate to form L-glutamate 5-phosphate. In Alkaliphilus oremlandii (strain OhILAs) (Clostridium oremlandii (strain OhILAs)), this protein is Glutamate 5-kinase.